A 29-amino-acid polypeptide reads, in one-letter code: U1-pseudomyrmecitoxin-Pt1 subunit SS2 (29 aa).

Belongs to the myrmexin family. As to quaternary structure, heterodimer composed of subunit SS2 and subunit LS1 (U1-PSDTX-Pt1e), and heterodimer composed of subunit SS2 and LS2 (U1-PSDTX-Pt1c); disulfide-linked. In terms of tissue distribution, expressed by the venom gland.

It is found in the secreted. In terms of biological role, this heterodimer may have anti-inflammatory properties, since the myrmexin complex (composed of 6 SS-LS heterodimers) inhibits carrageenin-induced edema in a dose-dependent manner (after subcutaneous injection into rats). The polypeptide is U1-pseudomyrmecitoxin-Pt1 subunit SS2 (Pseudomyrmex triplarinus (Ant)).